A 109-amino-acid chain; its full sequence is Spermidine export protein MdtI (109 aa).

4 consecutive transmembrane segments (helical) span residues 6-26 (WIHAAWLAVAIVLEIIANVFL), 36-56 (VYGILSLAAVLGAFSALSQAV), 64-84 (AYALWGGFGIAATIAAGWVLF), and 88-108 (LNNKGWAGLILLVAGMVLIKL).

Belongs to the drug/metabolite transporter (DMT) superfamily. Small multidrug resistance (SMR) (TC 2.A.7.1) family. MdtI subfamily. In terms of assembly, forms a complex with MdtJ.

The protein localises to the cell inner membrane. Its function is as follows. Catalyzes the excretion of spermidine. This chain is Spermidine export protein MdtI, found in Klebsiella pneumoniae (strain 342).